We begin with the raw amino-acid sequence, 79 residues long: U16-theraphotoxin-Cg1a (79 aa).

The N-terminal stretch at 1-19 (MRALLIIAGLALFLVVCNA) is a signal peptide. A propeptide spanning residues 20–44 (SQVNEQRKLNEMLSVMFAVEEPQER) is cleaved from the precursor. Cystine bridges form between Cys-47–Cys-62, Cys-54–Cys-67, and Cys-61–Cys-74.

Belongs to the neurotoxin 10 (Hwtx-1) family. 34 (Jztx-26) subfamily. Expressed by the venom gland.

The protein localises to the secreted. Probable ion channel inhibitor. This Chilobrachys guangxiensis (Chinese earth tiger tarantula) protein is U16-theraphotoxin-Cg1a.